The chain runs to 306 residues: Heterogeneous nuclear ribonucleoproteins C1/C2 (306 aa).

At Ala-2 the chain carries N-acetylalanine. Glycyl lysine isopeptide (Lys-Gly) (interchain with G-Cter in SUMO2) cross-links involve residues Lys-8, Lys-50, Lys-89, and Lys-94. One can recognise an RRM domain in the interval 16 to 87 (SRVFIGNLNT…QVLDINLAAE (72 aa)). A phosphoserine mark is found at Ser-107 and Val-108. Thr-109 bears the Phosphothreonine mark. Phosphoserine occurs at positions 113, 115, and 121. 2 disordered regions span residues 139–190 (YPAR…KLKG) and 221–306 (QSKQ…EDDS). The Nuclear localization signal motif lies at 155 to 161 (PSKRQRV). A phosphoserine mark is found at Ser-162 and Ser-166. Residues 175–185 (SKSGQRGSSKS) are compositionally biased toward low complexity. At Lys-176 the chain carries N6-acetyllysine; alternate. Lys-176 participates in a covalent cross-link: Glycyl lysine isopeptide (Lys-Gly) (interchain with G-Cter in SUMO2); alternate. The stretch at 190 to 238 (GDDLQAIKKELTQIKQKVDSLLENLEKIEKEQSKQAVEMKNDKSEEEQS) forms a coiled coil. Residues 221 to 232 (QSKQAVEMKNDK) show a composition bias toward basic and acidic residues. Glycyl lysine isopeptide (Lys-Gly) (interchain with G-Cter in SUMO2) cross-links involve residues Lys-223 and Lys-229. Lys-232 participates in a covalent cross-link: Glycyl lysine isopeptide (Lys-Gly) (interchain with G-Cter in SUMO2); alternate. Lys-232 is covalently cross-linked (Glycyl lysine isopeptide (Lys-Gly) (interchain with G-Cter in SUMO1); alternate). Residues Ser-233, Ser-238, Ser-239, and Ser-241 each carry the phosphoserine modification. Residues 242–253 (VKKDETNVKMES) show a composition bias toward basic and acidic residues. Residues Lys-243 and Lys-244 each participate in a glycyl lysine isopeptide (Lys-Gly) (interchain with G-Cter in SUMO2) cross-link. Lys-250 is covalently cross-linked (Glycyl lysine isopeptide (Lys-Gly) (interchain with G-Cter in SUMO2); alternate). Lys-250 participates in a covalent cross-link: Glycyl lysine isopeptide (Lys-Gly) (interchain with G-Cter in SUMO); alternate. 2 positions are modified to phosphoserine: Ser-253 and Ser-260. Residues 255–276 (GGADDSAEEGDLLDDDDNEDRG) show a composition bias toward acidic residues. Basic and acidic residues predominate over residues 277–287 (DDQLELIKDDE). The span at 288–306 (KEAEEGEDDRDSANGEDDS) shows a compositional bias: acidic residues. Phosphoserine is present on residues Ser-299 and Ser-306.

The protein belongs to the RRM HNRPC family. RALY subfamily. In terms of assembly, tetramer composed of 3 copies of isoform C1 and 1 copy of isoform C2. Assembly of 3 tetramers with bound pre-mRNA gives rise to a 19S complex that interacts with HNRNPA2B1 tetramers. Component of the 40S hnRNP particle. Identified in the spliceosome C complex. Interacts with IGF2BP1. Interacts with DHX9; this interaction is direct, enhanced probably by their concomitant binding to RNA and mediates the attachment to actin filaments. Interacts with PPIA/CYPA. Interacts with YWHAE. Phosphorylated on Ser-260 and Ser-299 in resting cells. Phosphorylated on Ser-253 and on 1 serine residue in the poly-Ser stretch at position 238 in response to hydrogen peroxide. In terms of processing, sumoylated. Sumoylation reduces affinity for mRNA. Post-translationally, ubiquitinated and degraded after nucleo-cytoplasmic transport by YWHAE.

The protein resides in the nucleus. Its function is as follows. Binds pre-mRNA and nucleates the assembly of 40S hnRNP particles. Interacts with poly-U tracts in the 3'-UTR or 5'-UTR of mRNA and modulates the stability and the level of translation of bound mRNA molecules. Single HNRNPC tetramers bind 230-240 nucleotides. Trimers of HNRNPC tetramers bind 700 nucleotides. May play a role in the early steps of spliceosome assembly and pre-mRNA splicing. N6-methyladenosine (m6A) has been shown to alter the local structure in mRNAs and long non-coding RNAs (lncRNAs) via a mechanism named 'm(6)A-switch', facilitating binding of HNRNPC, leading to regulation of mRNA splicing. The chain is Heterogeneous nuclear ribonucleoproteins C1/C2 (HNRNPC) from Homo sapiens (Human).